A 667-amino-acid chain; its full sequence is DNA ligase (667 aa).

Residues 32-36 (DSEYD), 81-82 (SL), and E110 contribute to the NAD(+) site. The active-site N6-AMP-lysine intermediate is the K112. NAD(+) is bound by residues R133, E167, K283, and K307. Zn(2+) contacts are provided by C401, C404, C419, and C424. One can recognise a BRCT domain in the interval 586 to 667 (EGHPEFSGKT…FVDKQNELNS (82 aa)).

It belongs to the NAD-dependent DNA ligase family. LigA subfamily. Mg(2+) is required as a cofactor. Mn(2+) serves as cofactor.

It carries out the reaction NAD(+) + (deoxyribonucleotide)n-3'-hydroxyl + 5'-phospho-(deoxyribonucleotide)m = (deoxyribonucleotide)n+m + AMP + beta-nicotinamide D-nucleotide.. In terms of biological role, DNA ligase that catalyzes the formation of phosphodiester linkages between 5'-phosphoryl and 3'-hydroxyl groups in double-stranded DNA using NAD as a coenzyme and as the energy source for the reaction. It is essential for DNA replication and repair of damaged DNA. The protein is DNA ligase of Staphylococcus aureus (strain bovine RF122 / ET3-1).